Here is a 454-residue protein sequence, read N- to C-terminus: MSLNVVILAAGKGTRMRSDLPKVLHSVAHKPMVQHVIDTARELNADNINLVYGYGGELLKAKLGEQPLNFVLQAEQLGTGHAVAQAIDHINDEDTVLVLYGDVPLTRKETLEALLAARQPDGVAVLTVHLDNPTGYGRMVREGGKVVGIVEQKDASPEQLKINEINSGIMALPGKRLKAWLGRLENNNAQGEFYLTDVIAMAHADGVAIDTAHPANPIETEGANNRVQLAALERAYQARRAEELMLAGANLRDPARIDIRGDVTVGMDVMIDVNVIFEGTVKLGNNVTIGAGAILIDCDIADNADIKPYSIIEGAKLGDSASAGPFARLRPGAELHKDAHIGNFVEMKKAVLGEGSKAGHLAYLGDAEIGKGVNIGAGTITCNYDGANKHLTVIEDNVFVGSDTQLVAPVVIRKGATLGAGSTVTHEVGENELVITRVKQRHIQGWQRPVKKPK.

The pyrophosphorylase stretch occupies residues 1–226 (MSLNVVILAA…PIETEGANNR (226 aa)). UDP-N-acetyl-alpha-D-glucosamine-binding positions include 8-11 (LAAG), Lys-22, Gln-73, 78-79 (GT), 100-102 (YGD), Gly-137, Glu-151, Asn-166, and Asn-224. Mg(2+) is bound at residue Asp-102. Residue Asn-224 participates in Mg(2+) binding. The segment at 227–247 (VQLAALERAYQARRAEELMLA) is linker. Residues 248-454 (GANLRDPARI…GWQRPVKKPK (207 aa)) form an N-acetyltransferase region. Positions 330 and 348 each coordinate UDP-N-acetyl-alpha-D-glucosamine. His-360 acts as the Proton acceptor in catalysis. Residues Tyr-363 and Asn-374 each coordinate UDP-N-acetyl-alpha-D-glucosamine. Residues Ala-377, 383 to 384 (NY), Ser-402, Ala-420, and Arg-437 each bind acetyl-CoA.

It in the N-terminal section; belongs to the N-acetylglucosamine-1-phosphate uridyltransferase family. The protein in the C-terminal section; belongs to the transferase hexapeptide repeat family. In terms of assembly, homotrimer. Mg(2+) is required as a cofactor.

It localises to the cytoplasm. The catalysed reaction is alpha-D-glucosamine 1-phosphate + acetyl-CoA = N-acetyl-alpha-D-glucosamine 1-phosphate + CoA + H(+). It catalyses the reaction N-acetyl-alpha-D-glucosamine 1-phosphate + UTP + H(+) = UDP-N-acetyl-alpha-D-glucosamine + diphosphate. It functions in the pathway nucleotide-sugar biosynthesis; UDP-N-acetyl-alpha-D-glucosamine biosynthesis; N-acetyl-alpha-D-glucosamine 1-phosphate from alpha-D-glucosamine 6-phosphate (route II): step 2/2. Its pathway is nucleotide-sugar biosynthesis; UDP-N-acetyl-alpha-D-glucosamine biosynthesis; UDP-N-acetyl-alpha-D-glucosamine from N-acetyl-alpha-D-glucosamine 1-phosphate: step 1/1. It participates in bacterial outer membrane biogenesis; LPS lipid A biosynthesis. In terms of biological role, catalyzes the last two sequential reactions in the de novo biosynthetic pathway for UDP-N-acetylglucosamine (UDP-GlcNAc). The C-terminal domain catalyzes the transfer of acetyl group from acetyl coenzyme A to glucosamine-1-phosphate (GlcN-1-P) to produce N-acetylglucosamine-1-phosphate (GlcNAc-1-P), which is converted into UDP-GlcNAc by the transfer of uridine 5-monophosphate (from uridine 5-triphosphate), a reaction catalyzed by the N-terminal domain. In Shewanella amazonensis (strain ATCC BAA-1098 / SB2B), this protein is Bifunctional protein GlmU.